A 426-amino-acid chain; its full sequence is D-tagatose-1,6-bisphosphate aldolase subunit KbaZ (426 aa).

It belongs to the GatZ/KbaZ family. KbaZ subfamily. As to quaternary structure, forms a complex with KbaY.

It functions in the pathway carbohydrate metabolism; D-tagatose 6-phosphate degradation; D-glyceraldehyde 3-phosphate and glycerone phosphate from D-tagatose 6-phosphate: step 2/2. Component of the tagatose-1,6-bisphosphate aldolase KbaYZ that is required for full activity and stability of the Y subunit. Could have a chaperone-like function for the proper and stable folding of KbaY. When expressed alone, KbaZ does not show any aldolase activity. In Escherichia coli O17:K52:H18 (strain UMN026 / ExPEC), this protein is D-tagatose-1,6-bisphosphate aldolase subunit KbaZ.